A 113-amino-acid polypeptide reads, in one-letter code: Putative membrane protein insertion efficiency factor (113 aa).

The protein belongs to the UPF0161 family.

The protein resides in the cell inner membrane. In terms of biological role, could be involved in insertion of integral membrane proteins into the membrane. This Campylobacter jejuni subsp. jejuni serotype O:2 (strain ATCC 700819 / NCTC 11168) protein is Putative membrane protein insertion efficiency factor.